A 223-amino-acid polypeptide reads, in one-letter code: MTVDDDIEWRVTPGLSPYAETVAEMEARAAAIRAGEARELIWLLEHPPLYTAGTSAEADELLLPDRFPVFRSGRGGRYTYHGPGQRVGYVLLDLDRRGRDVRCFVAAIENWVIATLGDFGIAGRSEPGRVGIWTGHGPDEAKIGAIGVRVRRWVSFHGFSLNVDPDLSHFSGIVPCGLGEFAVTSMARLGIPAEMAAVDAALRRHFPAMLAGLRCSTRSDKDS.

Positions 35 to 214 (GEARELIWLL…HFPAMLAGLR (180 aa)) constitute a BPL/LPL catalytic domain. Residues 74-81 (RGGRYTYH), 145-147 (AIG), and 158-160 (GFS) each bind substrate. The active-site Acyl-thioester intermediate is the Cys-176.

This sequence belongs to the LipB family.

The protein resides in the cytoplasm. The catalysed reaction is octanoyl-[ACP] + L-lysyl-[protein] = N(6)-octanoyl-L-lysyl-[protein] + holo-[ACP] + H(+). Its pathway is protein modification; protein lipoylation via endogenous pathway; protein N(6)-(lipoyl)lysine from octanoyl-[acyl-carrier-protein]: step 1/2. Its function is as follows. Catalyzes the transfer of endogenously produced octanoic acid from octanoyl-acyl-carrier-protein onto the lipoyl domains of lipoate-dependent enzymes. Lipoyl-ACP can also act as a substrate although octanoyl-ACP is likely to be the physiological substrate. In Rhizorhabdus wittichii (strain DSM 6014 / CCUG 31198 / JCM 15750 / NBRC 105917 / EY 4224 / RW1) (Sphingomonas wittichii), this protein is Octanoyltransferase.